The following is a 92-amino-acid chain: Small ribosomal subunit protein uS19 (92 aa).

Belongs to the universal ribosomal protein uS19 family.

Protein S19 forms a complex with S13 that binds strongly to the 16S ribosomal RNA. This chain is Small ribosomal subunit protein uS19, found in Methylobacterium nodulans (strain LMG 21967 / CNCM I-2342 / ORS 2060).